The sequence spans 88 residues: Large ribosomal subunit protein bL27 (88 aa).

The segment at 1–24 (MATKKSGGSSGNGRDSRGRRLGVK) is disordered.

Belongs to the bacterial ribosomal protein bL27 family.

This chain is Large ribosomal subunit protein bL27, found in Ehrlichia canis (strain Jake).